The chain runs to 301 residues: MAARLRDYWDLTKPKVVALIVFTALVGMFLAIPGIPSVVQIQSGALGFLGIWLAAAAAAAINQLLDAKIDAQMARTSWRPLVVGKVRPVQVLVFAGVLITLSMTILTLGVNLITAVLTFTSLIGYAVIYTVYLKRMTSQNIVIGGLAGAMPPMLGWAAVTGLSTAADWINASLLVAIIFVWTPPHFWALAIFRRADYAKASIPMLPVTHGVQHTSRQILLYTVILSVVTLLPVATGMSGVFYLGAALVLDAVFLWYAWRLLDPPDELFAMKTFGYSIVYLMALFAFLMFDHWLRLADFYWN.

9 consecutive transmembrane segments (helical) span residues 16–36, 41–61, 93–113, 114–134, 141–161, 172–192, 217–237, 238–258, and 273–293; these read VVAL…PGIP, IQSG…AAAI, VFAG…VNLI, TAVL…VYLK, IVIG…AVTG, SLLV…LAIF, QILL…ATGM, SGVF…WYAW, and FGYS…DHWL.

This sequence belongs to the UbiA prenyltransferase family. Protoheme IX farnesyltransferase subfamily.

The protein localises to the cell inner membrane. It carries out the reaction heme b + (2E,6E)-farnesyl diphosphate + H2O = Fe(II)-heme o + diphosphate. It participates in porphyrin-containing compound metabolism; heme O biosynthesis; heme O from protoheme: step 1/1. Its function is as follows. Converts heme B (protoheme IX) to heme O by substitution of the vinyl group on carbon 2 of heme B porphyrin ring with a hydroxyethyl farnesyl side group. The polypeptide is Protoheme IX farnesyltransferase (Xylella fastidiosa (strain 9a5c)).